The primary structure comprises 454 residues: Transmembrane protein adipocyte-associated 1 homolog (454 aa).

2 N-linked (GlcNAc...) asparagine glycosylation sites follow: Asn26 and Asn44. 5 consecutive transmembrane segments (helical) span residues 80-100 (AILI…TSVI), 113-133 (AFTL…VYSM), 151-171 (IIIK…GLLF), 180-200 (ILIA…VQVI), and 224-244 (FVFW…IMCL). The N-linked (GlcNAc...) asparagine glycan is linked to Asn258. A run of 2 helical transmembrane segments spans residues 262–282 (FIYC…AALI) and 290–310 (LCFV…IIYF). Residues Asn322 and Asn323 are each glycosylated (N-linked (GlcNAc...) asparagine). The segment at 408 to 454 (RTGSDDFAHHRDSMLSEPSTGTTTRHLKGLGPQGSLVFEEDPSSLRL) is disordered. The span at 410–421 (GSDDFAHHRDSM) shows a compositional bias: basic and acidic residues. The segment covering 445-454 (FEEDPSSLRL) has biased composition (acidic residues).

This sequence belongs to the UPF0359 family.

The protein localises to the membrane. This Caenorhabditis briggsae protein is Transmembrane protein adipocyte-associated 1 homolog (tpra-1).